A 637-amino-acid chain; its full sequence is ATP-dependent rRNA helicase SPB4 (637 aa).

The short motif at 14 to 42 (WDTLNPPLSEWIRDAVATMGFDQMTPVQA) is the Q motif element. Residues 45–247 (LPHFMGNKDV…RVGLRNPVKI (203 aa)) enclose the Helicase ATP-binding domain. Position 58 to 65 (58 to 65 (AVTGSGKT)) interacts with ATP. A DEAD box motif is present at residues 195–198 (DEAD). One can recognise a Helicase C-terminal domain in the interval 283–438 (ALAELLRQLP…TITTSEDDAA (156 aa)). The stretch at 524–631 (KEKTREQQRK…AAAKQEKDGE (108 aa)) forms a coiled coil. Composition is skewed to basic and acidic residues over residues 535–553 (ALEEEKSGVKKQDKSEEFK), 563–576 (SAKHEKEDDRVERR), 583–618 (RDAEATSKMTDDEKVKQMELNDLIAEVRRQNREKAA), and 625–637 (KQEKDGEFKGFDD). Residues 535–637 (ALEEEKSGVK…KDGEFKGFDD (103 aa)) are disordered.

It belongs to the DEAD box helicase family. DDX55/SPB4 subfamily. Component of pre-60S ribosomal complexes.

It is found in the nucleus. It localises to the nucleolus. The enzyme catalyses ATP + H2O = ADP + phosphate + H(+). Its function is as follows. ATP-binding RNA helicase involved in the biogenesis of 60S ribosomal subunits. Binds 90S pre-ribosomal particles and dissociates from pre-60S ribosomal particles after processing of 27SB pre-rRNA. Required for the normal formation of 18S rRNA through the processing of pre-rRNAs at sites A0, A1 and A2, and the normal formation of 25S and 5.8S rRNAs through the processing of pre-rRNAs at sites C1 and C2. This is ATP-dependent rRNA helicase SPB4 from Gibberella zeae (strain ATCC MYA-4620 / CBS 123657 / FGSC 9075 / NRRL 31084 / PH-1) (Wheat head blight fungus).